A 334-amino-acid polypeptide reads, in one-letter code: MPSASKNFRLQSKYVFLTYPKCSSQRDDLFQFLWEKLTPFLIFFLGVASELHQDGTTHYHALIQLDKKPCIRDPSFFDFEGNHPNIQPARNSKQVLDYISKDGDIKTRGDFRDHKVSPRKSDARWRTIIQTATSKEEYLDMIKEEFPHEWATKLQWLEYSANKLFPPQPEQYVSPFTESDLRCHEDLHNWRETHLYHDEGRTGVRHPSLYICGPTRTGKTTWARSLGRHNYWNGTIDFTNYDEHATYNIIDDIPFKFVPLWKQLIGCQSDFTVNPKYGKKKKIKGGIPSIILCNPDEDWMLSMTSQQKDYFEDNCVTHYMCDGETFFARESSSH.

Positions 9 to 111 (RLQSKYVFLT…DGDIKTRGDF (103 aa)) constitute a CRESS-DNA virus Rep endonuclease domain. Residues 16–19 (FLTY) carry the RCR-1 motif. A divalent metal cation contacts are provided by Glu-50, His-58, and His-60. The RCR-2 motif lies at 58 to 60 (HYH). The For DNA cleavage activity role is filled by Tyr-98. Residues 98–101 (YISK) carry the RCR-3 motif. An a divalent metal cation-binding site is contributed by Asp-102. An oligomerization region spans residues 160-172 (SANKLFPPQPEQY). 213-220 (GPTRTGKT) is an ATP binding site. Residues 236 to 254 (IDFTNYDEHATYNIIDDIP) are transactivation. The Nuclear localization signal signature appears at 276 to 286 (KYGKKKKIKGG).

The protein belongs to the geminiviridae Rep protein family. Homooligomer. Rep binds to repeated DNA motifs (iterons). Forms the O-complex, which is a Rep-DNA complex involved in the initiation of RCR. Part of the C- and V-complexes which are RepA-Rep-DNA complexes involved in the c-sense and v-sense transcription. The cofactor is Mg(2+). Requires Mn(2+) as cofactor.

It localises to the host nucleus. Its function is as follows. Essential for the replication of viral ssDNA. The closed circular ssDNA genome is first converted to a superhelical dsDNA. Rep binds a specific region at the genome origin of replication. It introduces an endonucleolytic nick within the conserved sequence 5'-TAATATTAC-3' in the intergenic region of the genome present in all geminiviruses, thereby initiating the rolling circle replication (RCR). Following cleavage, binds covalently to the 5'-phosphate of DNA as a tyrosyl ester. The cleavage gives rise to a free 3'-OH that serves as a primer for the cellular DNA polymerase. The polymerase synthesizes the (+) strand DNA by rolling circle mechanism. After one round of replication, a Rep-catalyzed nucleotidyl transfer reaction releases a circular single-stranded virus genome, thereby terminating the replication. Displays origin-specific DNA cleavage, nucleotidyl transferase, ATPase and helicase activities. Acts a an inhibitor of C-sense gene transcription. This chain is Replication-associated protein, found in Phaseolus vulgaris (Kidney bean).